We begin with the raw amino-acid sequence, 692 residues long: Elongation factor G 1 (692 aa).

A tr-type G domain is found at 8-283; the sequence is EKTRNIGIMA…SVVEYLPSPV (276 aa). GTP-binding positions include 17–24, 81–85, and 135–138; these read AHIDAGKT, DTPGH, and NKMD.

Belongs to the TRAFAC class translation factor GTPase superfamily. Classic translation factor GTPase family. EF-G/EF-2 subfamily.

The protein resides in the cytoplasm. Catalyzes the GTP-dependent ribosomal translocation step during translation elongation. During this step, the ribosome changes from the pre-translocational (PRE) to the post-translocational (POST) state as the newly formed A-site-bound peptidyl-tRNA and P-site-bound deacylated tRNA move to the P and E sites, respectively. Catalyzes the coordinated movement of the two tRNA molecules, the mRNA and conformational changes in the ribosome. The protein is Elongation factor G 1 of Geobacter metallireducens (strain ATCC 53774 / DSM 7210 / GS-15).